Here is a 308-residue protein sequence, read N- to C-terminus: MQIYPLRLLPNKIDFDFMNFKKVSYSFSIILSLISFIWIGIYKFNFGIDFAGGIVIEVRLDQAPDLPKMRGVLGELGIGEVVLQNFGSERDLSIRFGSSSEENLMKNIELIKASLQSNFPYKFEYRKVDFVGPQVGRQLIEAGAMAMLFSFLAIMVYIWVRFEWYFGLGILIALVHDVILALGFMSMTKLDFNLSTIAAVLTIIGYSVNDSVVIYDRIRENLRKYHKKNITEIINLSINETLSRTILTVITTLLANLALILFGGEAIRSFSVLVFFGIIAGTYSSIFISAPILTMFANRKFNKKVIER.

A run of 6 helical transmembrane segments spans residues 28–48 (SIIL…NFGI), 140–160 (IEAG…YIWV), 164–184 (WYFG…ALGF), 194–214 (LSTI…SVVI), 246–266 (ILTV…GGEA), and 272–292 (VLVF…SAPI).

Belongs to the SecD/SecF family. SecF subfamily. In terms of assembly, forms a complex with SecD. Part of the essential Sec protein translocation apparatus which comprises SecA, SecYEG and auxiliary proteins SecDF-YajC and YidC.

Its subcellular location is the cell inner membrane. Part of the Sec protein translocase complex. Interacts with the SecYEG preprotein conducting channel. SecDF uses the proton motive force (PMF) to complete protein translocation after the ATP-dependent function of SecA. This is Protein translocase subunit SecF from Rickettsia felis (strain ATCC VR-1525 / URRWXCal2) (Rickettsia azadi).